The chain runs to 178 residues: GTP-dependent dephospho-CoA kinase (178 aa).

Residues D48, I49, D67, K69, and E126 each contribute to the GTP site.

Belongs to the GTP-dependent DPCK family.

The enzyme catalyses 3'-dephospho-CoA + GTP = GDP + CoA + H(+). The protein operates within cofactor biosynthesis; coenzyme A biosynthesis. Functionally, catalyzes the GTP-dependent phosphorylation of the 3'-hydroxyl group of dephosphocoenzyme A to form coenzyme A (CoA). In Methanothrix thermoacetophila (strain DSM 6194 / JCM 14653 / NBRC 101360 / PT) (Methanosaeta thermophila), this protein is GTP-dependent dephospho-CoA kinase.